Here is a 402-residue protein sequence, read N- to C-terminus: Tryptophan--tRNA ligase, cytoplasmic (402 aa).

Positions 97-106 (PSSEALHLGH) match the 'HIGH' region motif. A 'KMSKS' region motif is present at residues 280–284 (KMSAS).

Belongs to the class-I aminoacyl-tRNA synthetase family.

The protein resides in the cytoplasm. It localises to the cytosol. It carries out the reaction tRNA(Trp) + L-tryptophan + ATP = L-tryptophyl-tRNA(Trp) + AMP + diphosphate + H(+). The sequence is that of Tryptophan--tRNA ligase, cytoplasmic from Arabidopsis thaliana (Mouse-ear cress).